The primary structure comprises 137 residues: Large ribosomal subunit protein uL13 (137 aa).

Belongs to the universal ribosomal protein uL13 family. As to quaternary structure, part of the 50S ribosomal subunit.

In terms of biological role, this protein is one of the early assembly proteins of the 50S ribosomal subunit, although it is not seen to bind rRNA by itself. It is important during the early stages of 50S assembly. In Methanococcus maripaludis (strain DSM 14266 / JCM 13030 / NBRC 101832 / S2 / LL), this protein is Large ribosomal subunit protein uL13.